Reading from the N-terminus, the 287-residue chain is Pyridoxal kinase PdxY (287 aa).

Residues S10 and T45–Q46 contribute to the substrate site. ATP-binding positions include D112, A144, E149, K182, and R209–V212. D224 contacts substrate.

The protein belongs to the pyridoxine kinase family. PdxY subfamily. As to quaternary structure, homodimer. The cofactor is Mg(2+).

It carries out the reaction pyridoxal + ATP = pyridoxal 5'-phosphate + ADP + H(+). Its pathway is cofactor metabolism; pyridoxal 5'-phosphate salvage; pyridoxal 5'-phosphate from pyridoxal: step 1/1. Pyridoxal kinase involved in the salvage pathway of pyridoxal 5'-phosphate (PLP). Catalyzes the phosphorylation of pyridoxal to PLP. In Shigella sonnei (strain Ss046), this protein is Pyridoxal kinase PdxY.